The following is a 166-amino-acid chain: Probable dual specificity protein phosphatase H1 homolog (166 aa).

One can recognise a Tyrosine-protein phosphatase domain in the interval 25 to 166 (DITKITDYVY…FLNQIIDKYI (142 aa)). Cys108 acts as the Phosphocysteine intermediate in catalysis.

Belongs to the protein-tyrosine phosphatase family. Non-receptor class dual specificity subfamily. Homodimer.

Its subcellular location is the virion. The protein localises to the host cytoplasm. It carries out the reaction O-phospho-L-tyrosyl-[protein] + H2O = L-tyrosyl-[protein] + phosphate. It catalyses the reaction O-phospho-L-seryl-[protein] + H2O = L-seryl-[protein] + phosphate. Functionally, serine/Tyrosine phosphatase which down-regulates cellular antiviral response by dephosphorylating activated STAT1 and blocking interferon (IFN)-stimulated innate immune responses. The protein is Probable dual specificity protein phosphatase H1 homolog of Vertebrata (FPV).